The following is a 499-amino-acid chain: UDP-N-acetylmuramoyl-L-alanyl-D-glutamate--2,6-diaminopimelate ligase (499 aa).

UDP-N-acetyl-alpha-D-muramoyl-L-alanyl-D-glutamate-binding residues include leucine 30 and serine 32. 122–128 provides a ligand contact to ATP; the sequence is GTNGKTT. UDP-N-acetyl-alpha-D-muramoyl-L-alanyl-D-glutamate is bound by residues 164–165, serine 191, glutamine 197, and arginine 199; that span reads TT. The residue at position 231 (lysine 231) is an N6-carboxylysine. Meso-2,6-diaminopimelate contacts are provided by residues arginine 397, 421-424, glycine 472, and glutamate 476; that span reads DNPR. The Meso-diaminopimelate recognition motif motif lies at 421–424; sequence DNPR.

It belongs to the MurCDEF family. MurE subfamily. The cofactor is Mg(2+). In terms of processing, carboxylation is probably crucial for Mg(2+) binding and, consequently, for the gamma-phosphate positioning of ATP.

The protein resides in the cytoplasm. It carries out the reaction UDP-N-acetyl-alpha-D-muramoyl-L-alanyl-D-glutamate + meso-2,6-diaminopimelate + ATP = UDP-N-acetyl-alpha-D-muramoyl-L-alanyl-gamma-D-glutamyl-meso-2,6-diaminopimelate + ADP + phosphate + H(+). It functions in the pathway cell wall biogenesis; peptidoglycan biosynthesis. Its function is as follows. Catalyzes the addition of meso-diaminopimelic acid to the nucleotide precursor UDP-N-acetylmuramoyl-L-alanyl-D-glutamate (UMAG) in the biosynthesis of bacterial cell-wall peptidoglycan. The chain is UDP-N-acetylmuramoyl-L-alanyl-D-glutamate--2,6-diaminopimelate ligase from Blochmanniella floridana.